The sequence spans 353 residues: ATPase GET3A (353 aa).

27 to 34 serves as a coordination point for ATP; the sequence is KGGVGKTT. Asp56 is an active-site residue. Glu226 and Asn253 together coordinate ATP. The stretch at 320-353 forms a coiled coil; the sequence is TTSRSNVEELERKVHTLRLQLKTAEEELERVKSG.

The protein belongs to the arsA ATPase family. In terms of assembly, homodimer. Interacts with GET1 and GET4.

It localises to the cytoplasm. The protein localises to the cytosol. It is found in the endoplasmic reticulum. It catalyses the reaction ATP + H2O = ADP + phosphate + H(+). ATPase required for the post-translational delivery of tail-anchored (TA) proteins to the endoplasmic reticulum. Recognizes and selectively binds the transmembrane domain of TA proteins in the cytosol. This complex then targets to the endoplasmic reticulum by membrane-bound receptors, where the tail-anchored protein is released for insertion. This process is regulated by ATP binding and hydrolysis. ATP binding drives the homodimer towards the closed dimer state, facilitating recognition of newly synthesized TA membrane proteins. ATP hydrolysis is required for insertion. Subsequently, the homodimer reverts towards the open dimer state, lowering its affinity for the membrane-bound receptor, and returning it to the cytosol to initiate a new round of targeting. Involved in the control of root hair growth through the regulation of syntaxin SYP123 expression. The sequence is that of ATPase GET3A from Arabidopsis thaliana (Mouse-ear cress).